A 113-amino-acid chain; its full sequence is Large ribosomal subunit protein P1 (113 aa).

The tract at residues 84-113 (APAAAAKKETKKEEVKKEESDDDMGMGLFD) is disordered. Over residues 89–102 (AKKETKKEEVKKEE) the composition is skewed to basic and acidic residues.

The protein belongs to the eukaryotic ribosomal protein P1/P2 family. P1 and P2 exist as dimers at the large ribosomal subunit.

Functionally, plays an important role in the elongation step of protein synthesis. The protein is Large ribosomal subunit protein P1 (rplp1) of Dictyostelium discoideum (Social amoeba).